The primary structure comprises 80 residues: Exodeoxyribonuclease 7 small subunit (80 aa).

Belongs to the XseB family. In terms of assembly, heterooligomer composed of large and small subunits.

The protein resides in the cytoplasm. It carries out the reaction Exonucleolytic cleavage in either 5'- to 3'- or 3'- to 5'-direction to yield nucleoside 5'-phosphates.. Functionally, bidirectionally degrades single-stranded DNA into large acid-insoluble oligonucleotides, which are then degraded further into small acid-soluble oligonucleotides. The protein is Exodeoxyribonuclease 7 small subunit of Rickettsia akari (strain Hartford).